Consider the following 208-residue polypeptide: Ribosomal RNA large subunit methyltransferase E (208 aa).

Residues Gly61, Trp63, Asp81, Asp97, and Asp122 each coordinate S-adenosyl-L-methionine. Lys162 functions as the Proton acceptor in the catalytic mechanism.

This sequence belongs to the class I-like SAM-binding methyltransferase superfamily. RNA methyltransferase RlmE family.

The protein resides in the cytoplasm. It carries out the reaction uridine(2552) in 23S rRNA + S-adenosyl-L-methionine = 2'-O-methyluridine(2552) in 23S rRNA + S-adenosyl-L-homocysteine + H(+). Its function is as follows. Specifically methylates the uridine in position 2552 of 23S rRNA at the 2'-O position of the ribose in the fully assembled 50S ribosomal subunit. In Pseudomonas putida (strain GB-1), this protein is Ribosomal RNA large subunit methyltransferase E.